The following is a 135-amino-acid chain: MSKLNKTILADFEAAQIQRKLPEFNQGDTVVVNVKVKEGNRERVQAYEGVVIGTKNAGLNSAFTVRKISHGFGVERVFQTHSAIIDSVEVKRRGKVRAGKLYYLRGLEGKAARIKEDLAAAAQAKAARQAAAKAE.

The protein belongs to the bacterial ribosomal protein bL19 family.

In terms of biological role, this protein is located at the 30S-50S ribosomal subunit interface and may play a role in the structure and function of the aminoacyl-tRNA binding site. The chain is Large ribosomal subunit protein bL19 from Xanthomonas oryzae pv. oryzae (strain KACC10331 / KXO85).